Reading from the N-terminus, the 845-residue chain is Ribosome-releasing factor 2, mitochondrial (845 aa).

The N-terminal 28 residues, 1 to 28 (MIIATSLRSQTFCTWRAWRAVHSTAVRL), are a transit peptide targeting the mitochondrion. The tr-type G domain occupies 38-330 (DRTRNIGIIA…GVVKYLPSPL (293 aa)). GTP contacts are provided by residues 47 to 54 (AHIDAGKT), 111 to 115 (DTPGH), and 165 to 168 (NKMD).

This sequence belongs to the TRAFAC class translation factor GTPase superfamily. Classic translation factor GTPase family. EF-G/EF-2 subfamily.

The protein localises to the mitochondrion. Its function is as follows. Mitochondrial GTPase that mediates the disassembly of ribosomes from messenger RNA at the termination of mitochondrial protein biosynthesis. Not involved in the GTP-dependent ribosomal translocation step during translation elongation. This Scheffersomyces stipitis (strain ATCC 58785 / CBS 6054 / NBRC 10063 / NRRL Y-11545) (Yeast) protein is Ribosome-releasing factor 2, mitochondrial.